The primary structure comprises 725 residues: Ribonuclease R (725 aa).

Residues 264 to 592 enclose the RNB domain; that stretch reads RQDLTDLAFV…IHRLLWMHLF (329 aa). In terms of domain architecture, S1 motif spans 644-725; it reads GKTFSGFISA…IQKRAILTLI (82 aa).

Belongs to the RNR ribonuclease family. RNase R subfamily.

It localises to the cytoplasm. The enzyme catalyses Exonucleolytic cleavage in the 3'- to 5'-direction to yield nucleoside 5'-phosphates.. Its function is as follows. 3'-5' exoribonuclease that releases 5'-nucleoside monophosphates and is involved in maturation of structured RNAs. This is Ribonuclease R from Mycoplasma genitalium (strain ATCC 33530 / DSM 19775 / NCTC 10195 / G37) (Mycoplasmoides genitalium).